The following is an 84-amino-acid chain: Large ribosomal subunit protein bL27 (84 aa).

Residues 1-21 (MAHKKGAGSTKNGRDSKPKML) form a disordered region.

It belongs to the bacterial ribosomal protein bL27 family.

In Dehalococcoides mccartyi (strain ATCC BAA-2100 / JCM 16839 / KCTC 5957 / BAV1), this protein is Large ribosomal subunit protein bL27.